The sequence spans 174 residues: NADH-ubiquinone oxidoreductase chain 6 (174 aa).

A run of 5 helical transmembrane segments spans residues 1–21, 24–44, 47–67, 86–106, and 151–171; these read MTYVLFTLSVMLVMGFVGFSS, SPIYGGLALVVSGVVGCMIIL, GGAYLGLVMFLIYLGGMMVVF, FEVLACFLVGLMMEVGLVLWV, and WLVVVAGWTLFVGVYVVIEIT.

This sequence belongs to the complex I subunit 6 family. As to quaternary structure, core subunit of respiratory chain NADH dehydrogenase (Complex I) which is composed of 45 different subunits.

The protein localises to the mitochondrion inner membrane. The catalysed reaction is a ubiquinone + NADH + 5 H(+)(in) = a ubiquinol + NAD(+) + 4 H(+)(out). In terms of biological role, core subunit of the mitochondrial membrane respiratory chain NADH dehydrogenase (Complex I) which catalyzes electron transfer from NADH through the respiratory chain, using ubiquinone as an electron acceptor. Essential for the catalytic activity and assembly of complex I. The sequence is that of NADH-ubiquinone oxidoreductase chain 6 (MT-ND6) from Papio hamadryas (Hamadryas baboon).